The chain runs to 499 residues: Glycerol kinase (499 aa).

An ADP-binding site is contributed by Thr-13. Positions 13, 14, and 15 each coordinate ATP. Thr-13 contributes to the sn-glycerol 3-phosphate binding site. Residue Arg-17 participates in ADP binding. Arg-83, Glu-84, Tyr-135, and Asp-245 together coordinate sn-glycerol 3-phosphate. Arg-83, Glu-84, Tyr-135, Asp-245, and Gln-246 together coordinate glycerol. Residues Thr-267 and Gly-310 each contribute to the ADP site. Positions 267, 310, 314, and 411 each coordinate ATP. Positions 411 and 415 each coordinate ADP.

It belongs to the FGGY kinase family.

It catalyses the reaction glycerol + ATP = sn-glycerol 3-phosphate + ADP + H(+). It functions in the pathway polyol metabolism; glycerol degradation via glycerol kinase pathway; sn-glycerol 3-phosphate from glycerol: step 1/1. Inhibited by fructose 1,6-bisphosphate (FBP). In terms of biological role, key enzyme in the regulation of glycerol uptake and metabolism. Catalyzes the phosphorylation of glycerol to yield sn-glycerol 3-phosphate. This is Glycerol kinase from Xanthomonas euvesicatoria pv. vesicatoria (strain 85-10) (Xanthomonas campestris pv. vesicatoria).